Reading from the N-terminus, the 427-residue chain is Serine--tRNA ligase (427 aa).

Position 231–233 (231–233) interacts with L-serine; the sequence is TAE. 262-264 lines the ATP pocket; sequence RSE. E285 is a binding site for L-serine. An ATP-binding site is contributed by 349–352; the sequence is EISS. S385 lines the L-serine pocket.

The protein belongs to the class-II aminoacyl-tRNA synthetase family. Type-1 seryl-tRNA synthetase subfamily. In terms of assembly, homodimer. The tRNA molecule binds across the dimer.

The protein resides in the cytoplasm. It catalyses the reaction tRNA(Ser) + L-serine + ATP = L-seryl-tRNA(Ser) + AMP + diphosphate + H(+). The enzyme catalyses tRNA(Sec) + L-serine + ATP = L-seryl-tRNA(Sec) + AMP + diphosphate + H(+). Its pathway is aminoacyl-tRNA biosynthesis; selenocysteinyl-tRNA(Sec) biosynthesis; L-seryl-tRNA(Sec) from L-serine and tRNA(Sec): step 1/1. In terms of biological role, catalyzes the attachment of serine to tRNA(Ser). Is also able to aminoacylate tRNA(Sec) with serine, to form the misacylated tRNA L-seryl-tRNA(Sec), which will be further converted into selenocysteinyl-tRNA(Sec). The polypeptide is Serine--tRNA ligase (Listeria innocua serovar 6a (strain ATCC BAA-680 / CLIP 11262)).